The sequence spans 208 residues: MARNLDPKCRQCRREGEKLFLKGEKCFTDKCAIERRNYAPGQHGQKSGRLSDYGVQLREKQKLRRIYGVLERQFRNGYELAERQRGVTGENLLQLLECRLDTVSYRMGFGASRSEARQIVRHNGILVNGRRINIPSYQVKPGDVIEVAEKAKNHLRIKASVEAAEQRHFPEWLEVDTKAMKGTFKNKPERSDLPSSINESLVIELYSK.

Positions 98–158 constitute an S4 RNA-binding domain; the sequence is CRLDTVSYRM…EKAKNHLRIK (61 aa).

Belongs to the universal ribosomal protein uS4 family. In terms of assembly, part of the 30S ribosomal subunit. Contacts protein S5. The interaction surface between S4 and S5 is involved in control of translational fidelity.

One of the primary rRNA binding proteins, it binds directly to 16S rRNA where it nucleates assembly of the body of the 30S subunit. In terms of biological role, with S5 and S12 plays an important role in translational accuracy. This Nitrosospira multiformis (strain ATCC 25196 / NCIMB 11849 / C 71) protein is Small ribosomal subunit protein uS4.